Here is a 321-residue protein sequence, read N- to C-terminus: Protein-L-histidine N-pros-methyltransferase (321 aa).

The N-terminal stretch at 1 to 24 is a signal peptide; the sequence is MRLWLCWLGCYTLLLWALRRRMWA. N-linked (GlcNAc...) asparagine glycosylation is present at N89. S-adenosyl-L-homocysteine-binding residues include E177, N213, and Y298.

It belongs to the METTL9 family.

It localises to the endoplasmic reticulum. Its subcellular location is the mitochondrion. The enzyme catalyses L-histidyl-[protein] + S-adenosyl-L-methionine = N(pros)-methyl-L-histidyl-[protein] + S-adenosyl-L-homocysteine + H(+). Functionally, protein-histidine N-methyltransferase that specifically catalyzes 1-methylhistidine (pros-methylhistidine) methylation of target proteins. Mediates methylation of proteins with a His-x-His (HxH) motif (where 'x' is preferably a small amino acid); 1-methylhistidine modification may affect the binding of zinc and other metals to its target proteins. In Gallus gallus (Chicken), this protein is Protein-L-histidine N-pros-methyltransferase.